Here is a 126-residue protein sequence, read N- to C-terminus: Fluoride-specific ion channel FluC (126 aa).

Helical transmembrane passes span 4–24 (SILA…FLGL), 36–56 (GTLA…ALFA), 68–88 (LIIT…AEVV), and 99–119 (AFAA…AGIA). Gly75 and Thr78 together coordinate Na(+).

This sequence belongs to the fluoride channel Fluc/FEX (TC 1.A.43) family.

The protein localises to the cell inner membrane. It carries out the reaction fluoride(in) = fluoride(out). Na(+) is not transported, but it plays an essential structural role and its presence is essential for fluoride channel function. Its function is as follows. Fluoride-specific ion channel. Important for reducing fluoride concentration in the cell, thus reducing its toxicity. The protein is Fluoride-specific ion channel FluC of Chromobacterium violaceum (strain ATCC 12472 / DSM 30191 / JCM 1249 / CCUG 213 / NBRC 12614 / NCIMB 9131 / NCTC 9757 / MK).